An 88-amino-acid chain; its full sequence is Small ribosomal subunit protein uS15 (88 aa).

Belongs to the universal ribosomal protein uS15 family. In terms of assembly, part of the 30S ribosomal subunit. Forms a bridge to the 50S subunit in the 70S ribosome, contacting the 23S rRNA.

One of the primary rRNA binding proteins, it binds directly to 16S rRNA where it helps nucleate assembly of the platform of the 30S subunit by binding and bridging several RNA helices of the 16S rRNA. In terms of biological role, forms an intersubunit bridge (bridge B4) with the 23S rRNA of the 50S subunit in the ribosome. This chain is Small ribosomal subunit protein uS15, found in Polaromonas sp. (strain JS666 / ATCC BAA-500).